We begin with the raw amino-acid sequence, 216 residues long: MRTGIIAQKVGMTSVFNDKGERISLTLVKVDDCQVVGHKTLAKHGYNALVIGVKDQKISKVTKPMKQVFANAKIAPKTKLKEFRISEDNFIDIASILEVDHFRVGQFVDITATTIGKGFAGSMKRHNFRGLEASHGVSISHRSHGSTGQRQDPGKVFKGKKMAGHMGCNKVTIQNLKIFAVDTNRKLIMIQGSIPGHKNSYLLVKDAIKKAAITIA.

Residues 136-155 (GVSISHRSHGSTGQRQDPGK) are disordered. Gln-151 carries the N5-methylglutamine modification.

Belongs to the universal ribosomal protein uL3 family. In terms of assembly, part of the 50S ribosomal subunit. Forms a cluster with proteins L14 and L19. In terms of processing, methylated by PrmB.

Functionally, one of the primary rRNA binding proteins, it binds directly near the 3'-end of the 23S rRNA, where it nucleates assembly of the 50S subunit. This Rickettsia prowazekii (strain Madrid E) protein is Large ribosomal subunit protein uL3.